Reading from the N-terminus, the 422-residue chain is Phthiocerol/phthiodiolone dimycocerosyl transferase (422 aa).

The active-site Proton acceptor is the H124.

Belongs to the acyltransferase PapA5 family. Monomer. Interacts directly with the acyl carrier protein (ACP) domain of the mycocerosic acid synthase (mas) protein.

The enzyme catalyses 2 a mycocerosyl-[mycocerosic acid synthase] + a phthiocerol = a dimycocerosyl phthiocerol + 2 holo-[mycocerosic acid synthase].. It catalyses the reaction 2 a mycocerosyl-[mycocerosic acid synthase] + a phthiodiolone = a dimycocerosyl phthiodiolone + 2 holo-[mycocerosic acid synthase].. The catalysed reaction is 2 a mycocerosyl-[mycocerosic acid synthase] + a phenolphthiocerol = a dimycocerosyl phenolphthiocerol + 2 holo-[mycocerosic acid synthase].. In terms of biological role, catalyzes diesterification of phthiocerol, phthiodiolone, and phenolphthiocerol with mycocerosic acids, the final step in the phthiocerol, phthiodiolone and phenolphthiocerol dimycocerosate esters (PDIM) synthesis. Can directly transfer the mycocerosate bound to the mycocerosic acid synthase (mas) onto the substrate alcohols. This chain is Phthiocerol/phthiodiolone dimycocerosyl transferase (papA5), found in Mycobacterium tuberculosis (strain ATCC 25177 / H37Ra).